The following is a 430-amino-acid chain: Protein translocase subunit SecY (430 aa).

The next 10 helical transmembrane spans lie at 18 to 38 (IFFT…PAPG), 68 to 88 (FSIF…MQLL), 117 to 137 (LAIS…NNYL), 147 to 167 (IMSY…LIWL), 179 to 199 (GISI…LIQF), 217 to 237 (VLGL…VLEA), 269 to 289 (GVIP…LTLF), 308 to 328 (NVGM…YAFV), 368 to 388 (FVGS…TKFM), and 389 to 409 (GLPQ…GVAI).

Belongs to the SecY/SEC61-alpha family. Component of the Sec protein translocase complex. Heterotrimer consisting of SecY, SecE and SecG subunits. The heterotrimers can form oligomers, although 1 heterotrimer is thought to be able to translocate proteins. Interacts with the ribosome. Interacts with SecDF, and other proteins may be involved. Interacts with SecA.

The protein localises to the cell membrane. Its function is as follows. The central subunit of the protein translocation channel SecYEG. Consists of two halves formed by TMs 1-5 and 6-10. These two domains form a lateral gate at the front which open onto the bilayer between TMs 2 and 7, and are clamped together by SecE at the back. The channel is closed by both a pore ring composed of hydrophobic SecY resides and a short helix (helix 2A) on the extracellular side of the membrane which forms a plug. The plug probably moves laterally to allow the channel to open. The ring and the pore may move independently. In Staphylococcus aureus (strain NCTC 8325 / PS 47), this protein is Protein translocase subunit SecY.